Here is a 342-residue protein sequence, read N- to C-terminus: tRNA dimethylallyltransferase (342 aa).

Residues 1–13 (MNDTTAKTLNCSP) show a composition bias toward polar residues. Residues 1 to 21 (MNDTTAKTLNCSPASRDGFPE) form a disordered region. 40 to 47 (GPTGVGKT) lines the ATP pocket. 42-47 (TGVGKT) provides a ligand contact to substrate. Interaction with substrate tRNA regions lie at residues 65–68 (DSMQ) and 189–193 (QRILR).

Belongs to the IPP transferase family. Monomer. Requires Mg(2+) as cofactor.

The enzyme catalyses adenosine(37) in tRNA + dimethylallyl diphosphate = N(6)-dimethylallyladenosine(37) in tRNA + diphosphate. Functionally, catalyzes the transfer of a dimethylallyl group onto the adenine at position 37 in tRNAs that read codons beginning with uridine, leading to the formation of N6-(dimethylallyl)adenosine (i(6)A). In Syntrophobacter fumaroxidans (strain DSM 10017 / MPOB), this protein is tRNA dimethylallyltransferase.